Reading from the N-terminus, the 209-residue chain is Response regulator protein VraR (209 aa).

The Response regulatory domain occupies K4–Y120. Residue D55 is modified to 4-aspartylphosphate. Residues R141 to N206 form the HTH luxR-type domain. Positions N165 to S184 form a DNA-binding region, H-T-H motif.

In terms of processing, phosphorylated by VraS.

The protein resides in the cytoplasm. In terms of biological role, member of the two-component regulatory system VraS/VraR involved in the control of the cell wall peptidoglycan biosynthesis. The chain is Response regulator protein VraR (vraR) from Staphylococcus epidermidis (strain ATCC 35984 / DSM 28319 / BCRC 17069 / CCUG 31568 / BM 3577 / RP62A).